The following is a 250-amino-acid chain: DNA repair protein RecO (250 aa).

The protein belongs to the RecO family.

Its function is as follows. Involved in DNA repair and RecF pathway recombination. This chain is DNA repair protein RecO, found in Rhodospirillum centenum (strain ATCC 51521 / SW).